Here is a 211-residue protein sequence, read N- to C-terminus: Transcriptional regulator GfcR (211 aa).

It belongs to the purine/pyrimidine phosphoribosyltransferase family. GfcR subfamily.

In Methanocaldococcus jannaschii (strain ATCC 43067 / DSM 2661 / JAL-1 / JCM 10045 / NBRC 100440) (Methanococcus jannaschii), this protein is Transcriptional regulator GfcR.